Here is a 574-residue protein sequence, read N- to C-terminus: Glycine--tRNA ligase (574 aa).

Residues Arg-96 and Glu-162 each coordinate substrate. ATP contacts are provided by residues 194-196 (RNE), 204-209 (IRLREF), 327-328 (EC), and 450-453 (GIDR). 209 to 213 (FTQAE) is a substrate binding site. 446–450 (EPSYG) is a binding site for substrate.

The protein belongs to the class-II aminoacyl-tRNA synthetase family.

It is found in the cytoplasm. It carries out the reaction tRNA(Gly) + glycine + ATP = glycyl-tRNA(Gly) + AMP + diphosphate. Its function is as follows. Catalyzes the attachment of glycine to tRNA(Gly). The sequence is that of Glycine--tRNA ligase from Methanococcus maripaludis (strain C6 / ATCC BAA-1332).